A 275-amino-acid polypeptide reads, in one-letter code: Nitrogenase iron protein 1 (275 aa).

Residue 9–16 coordinates ATP; the sequence is GKGGIGKS. Position 97 (Cys-97) interacts with [4Fe-4S] cluster. Arg-100 bears the ADP-ribosylarginine; by dinitrogenase reductase ADP-ribosyltransferase mark. A [4Fe-4S] cluster-binding site is contributed by Cys-132.

It belongs to the NifH/BchL/ChlL family. As to quaternary structure, homodimer. [4Fe-4S] cluster serves as cofactor. In terms of processing, the reversible ADP-ribosylation of Arg-100 inactivates the nitrogenase reductase and regulates nitrogenase activity.

It catalyses the reaction N2 + 8 reduced [2Fe-2S]-[ferredoxin] + 16 ATP + 16 H2O = H2 + 8 oxidized [2Fe-2S]-[ferredoxin] + 2 NH4(+) + 16 ADP + 16 phosphate + 6 H(+). Functionally, the key enzymatic reactions in nitrogen fixation are catalyzed by the nitrogenase complex, which has 2 components: the iron protein and the molybdenum-iron protein. The sequence is that of Nitrogenase iron protein 1 (nifH1) from Methanothermobacter thermautotrophicus (strain ATCC 29096 / DSM 1053 / JCM 10044 / NBRC 100330 / Delta H) (Methanobacterium thermoautotrophicum).